The sequence spans 507 residues: Transcription factor NIGTH1 (507 aa).

Disordered stretches follow at residues 139–172 (ASAA…TALD) and 238–268 (SREA…RKAR). The span at 152–161 (PKEHSEHHPL) shows a compositional bias: basic and acidic residues. The HTH myb-type domain occupies 263–323 (PHRKARRCWS…HLQKYRLHTR (61 aa)). Residues 294–319 (PKQIRELMKVDGLTNDEVKSHLQKYR) constitute a DNA-binding region (H-T-H motif). The tract at residues 402-507 (AVAPPPPLPP…TTTSAGAINY (106 aa)) is disordered. The span at 412–433 (QQQLAPPYSAKSSASARLGSPD) shows a compositional bias: low complexity. Residues 437–446 (RGSGGGGGAA) are compositionally biased toward gly residues. Acidic residues predominate over residues 456–476 (ESIEEEGEGEEREDDDDDDEM).

Interacts with ACA5.

Its subcellular location is the nucleus. In terms of biological role, probable transcription factor that may play a role in regulatory networks controlling development and metabolism. The polypeptide is Transcription factor NIGTH1 (Oryza sativa subsp. japonica (Rice)).